The primary structure comprises 325 residues: Aspartate carbamoyltransferase catalytic subunit (325 aa).

Positions 55 and 56 each coordinate carbamoyl phosphate. Lys-83 provides a ligand contact to L-aspartate. Arg-105, His-135, and Gln-138 together coordinate carbamoyl phosphate. Arg-176 and Arg-230 together coordinate L-aspartate. Residues Gly-271 and Pro-272 each contribute to the carbamoyl phosphate site.

This sequence belongs to the aspartate/ornithine carbamoyltransferase superfamily. ATCase family. Heterododecamer (2C3:3R2) of six catalytic PyrB chains organized as two trimers (C3), and six regulatory PyrI chains organized as three dimers (R2).

The catalysed reaction is carbamoyl phosphate + L-aspartate = N-carbamoyl-L-aspartate + phosphate + H(+). It participates in pyrimidine metabolism; UMP biosynthesis via de novo pathway; (S)-dihydroorotate from bicarbonate: step 2/3. Catalyzes the condensation of carbamoyl phosphate and aspartate to form carbamoyl aspartate and inorganic phosphate, the committed step in the de novo pyrimidine nucleotide biosynthesis pathway. This Streptomyces avermitilis (strain ATCC 31267 / DSM 46492 / JCM 5070 / NBRC 14893 / NCIMB 12804 / NRRL 8165 / MA-4680) protein is Aspartate carbamoyltransferase catalytic subunit.